The chain runs to 112 residues: UPF0145 protein RB3016 (112 aa).

The protein belongs to the UPF0145 family.

The polypeptide is UPF0145 protein RB3016 (Rhodopirellula baltica (strain DSM 10527 / NCIMB 13988 / SH1)).